A 195-amino-acid chain; its full sequence is 2-amino-4-hydroxy-6-hydroxymethyldihydropteridine pyrophosphokinase (195 aa).

This sequence belongs to the HPPK family.

It catalyses the reaction 6-hydroxymethyl-7,8-dihydropterin + ATP = (7,8-dihydropterin-6-yl)methyl diphosphate + AMP + H(+). Its pathway is cofactor biosynthesis; tetrahydrofolate biosynthesis; 2-amino-4-hydroxy-6-hydroxymethyl-7,8-dihydropteridine diphosphate from 7,8-dihydroneopterin triphosphate: step 4/4. Catalyzes the transfer of pyrophosphate from adenosine triphosphate (ATP) to 6-hydroxymethyl-7,8-dihydropterin, an enzymatic step in folate biosynthesis pathway. This is 2-amino-4-hydroxy-6-hydroxymethyldihydropteridine pyrophosphokinase (folK) from Synechocystis sp. (strain ATCC 27184 / PCC 6803 / Kazusa).